Reading from the N-terminus, the 698-residue chain is PWWP domain-containing DNA repair factor 3A (698 aa).

Disordered stretches follow at residues 102 to 145 (TSLS…EDDQ) and 159 to 386 (CSPK…EEPP). Serine 105 carries the phosphoserine modification. Polar residues predominate over residues 129–139 (SQVSSAPSPSF). Phosphoserine occurs at positions 165, 168, and 170. The segment covering 200–211 (DESQNGSGSQLD) has biased composition (polar residues). 2 stretches are compositionally biased toward basic and acidic residues: residues 212–235 (HGQE…RGKA) and 341–350 (RAGDSDRPEE). Serine 355 and serine 356 each carry phosphoserine. Positions 370 to 384 (EEEEEEEEEEEEEEE) are enriched in acidic residues. A PWWP domain is found at 399-460 (VGMLVWLKYQ…KHFDCKEKHA (62 aa)).

It belongs to the PWWP3A family. In terms of assembly, interacts with TP53BP1 (via BRCT domain); the interaction is not dependent on its phosphorylation status. Binds nucleosomes. Interacts with trimethylated 'Lys-36' of histone H3 (H3K36me3) (in vitro).

Its subcellular location is the nucleus. Involved in the DNA damage response pathway by contributing to the maintenance of chromatin architecture. Recruited to the vicinity of DNA breaks by TP53BP1 and plays an accessory role to facilitate damage-induced chromatin changes and promoting chromatin relaxation. Required for efficient DNA repair and cell survival following DNA damage. The sequence is that of PWWP domain-containing DNA repair factor 3A from Rattus norvegicus (Rat).